A 139-amino-acid polypeptide reads, in one-letter code: Plastocyanin (139 aa).

Positions 1-34 (MKLISASLRRFSLAVLTILLVVSSFAVFTPSASA) are cleaved as a signal peptide. Residues 35-139 (ETYQVKLGTD…GMVGTITVQG (105 aa)) enclose the Plastocyanin-like domain. Cu cation is bound by residues His73, Cys123, His126, and Met131.

This sequence belongs to the plastocyanin family. The cofactor is Cu(2+).

It localises to the cellular thylakoid membrane. Functionally, participates in electron transfer between P700 and the cytochrome b6-f complex in photosystem I. The polypeptide is Plastocyanin (Nostoc punctiforme (strain ATCC 29133 / PCC 73102)).